The chain runs to 750 residues: Photosystem I P700 chlorophyll a apoprotein A1 (750 aa).

A run of 8 helical transmembrane segments spans residues 70 to 93, 156 to 179, 195 to 219, 291 to 309, 346 to 369, 385 to 411, 433 to 455, and 531 to 549; these read VFSA…FHGA, LYCT…FHYH, LNHH…HVSL, IAHH…GHMY, WHAQ…HHMY, LSLF…IFMV, AIIS…LYIH, and FLVH…LILL. 2 residues coordinate [4Fe-4S] cluster: Cys573 and Cys582. The next 2 membrane-spanning stretches (helical) occupy residues 589–610 and 664–686; these read HVFL…HFSW and LSAY…MFLF. His675 contributes to the chlorophyll a' binding site. The chlorophyll a site is built by Met683 and Tyr691. Trp692 is a phylloquinone binding site. Residues 724–744 traverse the membrane as a helical segment; sequence AVGVTHYLLGGIATTWAFFLA.

It belongs to the PsaA/PsaB family. In terms of assembly, the PsaA/B heterodimer binds the P700 chlorophyll special pair and subsequent electron acceptors. PSI consists of a core antenna complex that captures photons, and an electron transfer chain that converts photonic excitation into a charge separation. The eukaryotic PSI reaction center is composed of at least 11 subunits. Requires P700 is a chlorophyll a/chlorophyll a' dimer, A0 is one or more chlorophyll a, A1 is one or both phylloquinones and FX is a shared 4Fe-4S iron-sulfur center. as cofactor.

It localises to the plastid. The protein resides in the chloroplast thylakoid membrane. The catalysed reaction is reduced [plastocyanin] + hnu + oxidized [2Fe-2S]-[ferredoxin] = oxidized [plastocyanin] + reduced [2Fe-2S]-[ferredoxin]. Its function is as follows. PsaA and PsaB bind P700, the primary electron donor of photosystem I (PSI), as well as the electron acceptors A0, A1 and FX. PSI is a plastocyanin-ferredoxin oxidoreductase, converting photonic excitation into a charge separation, which transfers an electron from the donor P700 chlorophyll pair to the spectroscopically characterized acceptors A0, A1, FX, FA and FB in turn. Oxidized P700 is reduced on the lumenal side of the thylakoid membrane by plastocyanin. The polypeptide is Photosystem I P700 chlorophyll a apoprotein A1 (Calycanthus floridus var. glaucus (Eastern sweetshrub)).